A 792-amino-acid polypeptide reads, in one-letter code: Probable beta-D-xylosidase 6 (792 aa).

The signal sequence occupies residues 1-18; the sequence is MNLQLTLISLLFFTSAIA. N-linked (GlcNAc...) asparagine glycans are attached at residues N44, N104, N124, and N239. The active site involves D309. Residues N444 and N618 are each glycosylated (N-linked (GlcNAc...) asparagine).

This sequence belongs to the glycosyl hydrolase 3 family.

It is found in the secreted. Its subcellular location is the extracellular space. The protein resides in the extracellular matrix. This is Probable beta-D-xylosidase 6 (BXL6) from Arabidopsis thaliana (Mouse-ear cress).